Consider the following 220-residue polypeptide: Large ribosomal subunit protein uL16 (220 aa).

Belongs to the universal ribosomal protein uL16 family. In terms of assembly, component of the small ribosomal subunit. Mature ribosomes consist of a small (40S) and a large (60S) subunit. The 40S subunit contains about 33 different proteins and 1 molecule of RNA (18S). The 60S subunit contains about 49 different proteins and 3 molecules of RNA (25S, 5.8S and 5S).

The sequence is that of Large ribosomal subunit protein uL16 (RPL10) from Zea mays (Maize).